The primary structure comprises 349 residues: Protein RecA (349 aa).

69–76 (GPESSGKT) lines the ATP pocket.

It belongs to the RecA family.

It localises to the cytoplasm. Functionally, can catalyze the hydrolysis of ATP in the presence of single-stranded DNA, the ATP-dependent uptake of single-stranded DNA by duplex DNA, and the ATP-dependent hybridization of homologous single-stranded DNAs. It interacts with LexA causing its activation and leading to its autocatalytic cleavage. The chain is Protein RecA from Rippkaea orientalis (strain PCC 8801 / RF-1) (Cyanothece sp. (strain PCC 8801)).